A 133-amino-acid chain; its full sequence is Small ribosomal subunit protein uS15 (133 aa).

It belongs to the universal ribosomal protein uS15 family. In terms of assembly, part of the 30S ribosomal subunit.

In Methanosphaera stadtmanae (strain ATCC 43021 / DSM 3091 / JCM 11832 / MCB-3), this protein is Small ribosomal subunit protein uS15.